Consider the following 448-residue polypeptide: Bifunctional protein GlmU (448 aa).

The pyrophosphorylase stretch occupies residues 1 to 229 (MNNHTLNIII…NDEIQGINNL (229 aa)). Residues 11–14 (LAAG), K25, Q76, 81–82 (GT), 103–105 (YGD), G140, E154, N169, and N227 each bind UDP-N-acetyl-alpha-D-glucosamine. Residue D105 coordinates Mg(2+). N227 serves as a coordination point for Mg(2+). Positions 230-250 (LQLVRAEKIYQKQQAKLLLLS) are linker. Residues 251–448 (GIMIYNPSNF…NEKKQIHKKL (198 aa)) are N-acetyltransferase. UDP-N-acetyl-alpha-D-glucosamine is bound at residue K351. H363 functions as the Proton acceptor in the catalytic mechanism. Residues Y366 and N377 each contribute to the UDP-N-acetyl-alpha-D-glucosamine site. Acetyl-CoA is bound by residues A380, 386–387 (NY), S405, and A423.

It in the N-terminal section; belongs to the N-acetylglucosamine-1-phosphate uridyltransferase family. The protein in the C-terminal section; belongs to the transferase hexapeptide repeat family. Homotrimer. The cofactor is Mg(2+).

It localises to the cytoplasm. The catalysed reaction is alpha-D-glucosamine 1-phosphate + acetyl-CoA = N-acetyl-alpha-D-glucosamine 1-phosphate + CoA + H(+). It catalyses the reaction N-acetyl-alpha-D-glucosamine 1-phosphate + UTP + H(+) = UDP-N-acetyl-alpha-D-glucosamine + diphosphate. Its pathway is nucleotide-sugar biosynthesis; UDP-N-acetyl-alpha-D-glucosamine biosynthesis; N-acetyl-alpha-D-glucosamine 1-phosphate from alpha-D-glucosamine 6-phosphate (route II): step 2/2. The protein operates within nucleotide-sugar biosynthesis; UDP-N-acetyl-alpha-D-glucosamine biosynthesis; UDP-N-acetyl-alpha-D-glucosamine from N-acetyl-alpha-D-glucosamine 1-phosphate: step 1/1. It functions in the pathway bacterial outer membrane biogenesis; LPS lipid A biosynthesis. Its function is as follows. Catalyzes the last two sequential reactions in the de novo biosynthetic pathway for UDP-N-acetylglucosamine (UDP-GlcNAc). The C-terminal domain catalyzes the transfer of acetyl group from acetyl coenzyme A to glucosamine-1-phosphate (GlcN-1-P) to produce N-acetylglucosamine-1-phosphate (GlcNAc-1-P), which is converted into UDP-GlcNAc by the transfer of uridine 5-monophosphate (from uridine 5-triphosphate), a reaction catalyzed by the N-terminal domain. In Buchnera aphidicola subsp. Baizongia pistaciae (strain Bp), this protein is Bifunctional protein GlmU.